Consider the following 402-residue polypeptide: Leucine aminopeptidase 1 (402 aa).

The signal sequence occupies residues M1 to A18. The propeptide occupies R19 to K92. 2 N-linked (GlcNAc...) asparagine glycosylation sites follow: N111 and N184. Residues H192, D211, E250, and D277 each contribute to the Zn(2+) site. The N-linked (GlcNAc...) asparagine glycan is linked to N304. A disulfide bond links C326 and C330. H359 serves as a coordination point for Zn(2+).

This sequence belongs to the peptidase M28 family. M28E subfamily. Monomer. The cofactor is Zn(2+).

It localises to the secreted. Its function is as follows. Extracellular aminopeptidase that allows assimilation of proteinaceous substrates. This chain is Leucine aminopeptidase 1 (lap1), found in Neurospora crassa (strain ATCC 24698 / 74-OR23-1A / CBS 708.71 / DSM 1257 / FGSC 987).